A 164-amino-acid polypeptide reads, in one-letter code: 3-hydroxyacyl-[acyl-carrier-protein] dehydratase FabZ (164 aa).

Residue His-70 is part of the active site.

This sequence belongs to the thioester dehydratase family. FabZ subfamily.

It is found in the cytoplasm. The catalysed reaction is a (3R)-hydroxyacyl-[ACP] = a (2E)-enoyl-[ACP] + H2O. Functionally, involved in unsaturated fatty acids biosynthesis. Catalyzes the dehydration of short chain beta-hydroxyacyl-ACPs and long chain saturated and unsaturated beta-hydroxyacyl-ACPs. The chain is 3-hydroxyacyl-[acyl-carrier-protein] dehydratase FabZ from Synechocystis sp. (strain ATCC 27184 / PCC 6803 / Kazusa).